The primary structure comprises 93 residues: UPF0223 protein SAG0995 (93 aa).

It belongs to the UPF0223 family.

The sequence is that of UPF0223 protein SAG0995 from Streptococcus agalactiae serotype V (strain ATCC BAA-611 / 2603 V/R).